Here is a 2167-residue protein sequence, read N- to C-terminus: SH3 and multiple ankyrin repeat domains protein 1 (2167 aa).

A disordered region spans residues 1 to 63 (MTHSPATSED…TRGLQGRSMS (63 aa)). Low complexity predominate over residues 17 to 32 (SECPEGGSESDSSPDG). A compositionally biased stretch (gly residues) spans 33–47 (PGRGPQGTRGRGSGA). The residue at position 43 (arginine 43) is an Omega-N-methylarginine. The residue at position 186 (tyrosine 186) is a Phosphotyrosine. ANK repeat units follow at residues 212–242 (SGETPLTLAAQTEGSVEVIRTLCLGGAHIDF), 246–275 (DGMTALHKAACARHCLALTALLDLGGSPNY), 279–309 (RGLTPLFHTAMVGGDPRCCELLLYNRAQLGI), 313–342 (NGWQEIHQACQRGHSQHLEHLLFYGAEPGA), 346–375 (SGNTALHICALYNKETCARILLYRGANKDV), and 379–407 (NGQTPFQVAVIAGNFELGELIRNHREQDV). Disordered regions lie at residues 413–432 (SPKYAARRRGPPGAGLTVPP) and 454–546 (PGAS…SRGR). Over residues 454–479 (PGASSSGTPGPTSGSQGQSQPSAPST) the composition is skewed to low complexity. A compositionally biased stretch (gly residues) spans 527–542 (PAGGTGGSGGPGGSLG). Serine 540 carries the phosphoserine modification. Arginine 544 is modified (omega-N-methylarginine). Residues 554 to 613 (VPGRSFMAVKSYQAQGEGEISLSKGEKIKVLSIGEGGFWEGQVKGRVGWFPSDCLEEVAN) enclose the SH3 domain. The region spanning 663–757 (TVLLQKKDSE…TLMVKVVMVT (95 aa)) is the PDZ domain. Phosphoserine is present on residues serine 671 and serine 791. The segment at 841-894 (ISASESPGPGGLASLGKHRPKGFFATESSFDPHHRSQPSYDRPSFLPPGPGLML) is disordered. Serine 898 is modified (phosphoserine). Disordered stretches follow at residues 917 to 1233 (SRSL…LDFT) and 1245 to 1290 (RREG…RHSK). Over residues 928-947 (IPPPPTTSPPEPPYSTPPAP) the composition is skewed to pro residues. At arginine 958 the chain carries Omega-N-methylarginine. Residues 969–980 (PLPASSPSSFDG) are compositionally biased toward low complexity. Positions 1004–1028 (AHHHPPHHHHHHAPPPQPHHHHAHP) are enriched in basic residues. An Omega-N-methylarginine modification is found at arginine 1059. Over residues 1064–1089 (SPTSGAPSPSHHSSSGGSSGPAQAPA) the composition is skewed to low complexity. An omega-N-methylarginine mark is found at arginine 1098 and arginine 1109. 2 stretches are compositionally biased toward low complexity: residues 1132 to 1146 (SLPPASSPTSPALPR) and 1171 to 1184 (STSSSGRSSQGSST). The span at 1203 to 1224 (SPAPATSPVPPSPSPVPTPASP) shows a compositional bias: pro residues. A compositionally biased stretch (basic and acidic residues) spans 1245–1256 (RREGGWQNEARR). Arginine 1257 carries the asymmetric dimethylarginine modification. Serine 1291 is subject to Phosphoserine. 8 disordered regions span residues 1308–1331 (GGSSGGYGAYAAGSRAYGGSGSSS), 1361–1417 (LAAR…VLRL), 1429–1458 (RAGLGSQEKALTASPPAARRSLLHRLPPTA), 1500–1725 (FLEN…AGVA), 1740–1790 (GQAF…TPTS), 1828–1866 (VPPVPLPTASSLPRKLLPWEEGPGPPPPPLPGPLSQPQA), 1898–1988 (PWAR…STRH), and 2002–2029 (RRAPSPSLLPASDHKVSPAPRPSSLPIL). Positions 1363–1372 (ARERALKESS) are enriched in basic and acidic residues. Pro residues predominate over residues 1378–1395 (PQPPPRPPSPRYDAPPPT). Positions 1396-1408 (LHHHSPHSPHSPH) are enriched in basic residues. Arginine 1429 carries the post-translational modification Omega-N-methylarginine. Phosphoserine is present on serine 1442. Residues 1530 to 1541 (RRVLPTSPTSPR) show a composition bias toward low complexity. Residues 1589–1615 (PLTPGPPHPLPDPPSPATPLPAAPPPA) are compositionally biased toward pro residues. A compositionally biased stretch (polar residues) spans 1624-1641 (DSTASSLTSYDSEVATLT). Pro residues predominate over residues 1648 to 1676 (PGDPPAPGPPAPAAPAPPAPQPGPDPPPG). Residues 1684-1694 (VDSRSSSDHPL) are compositionally biased toward basic and acidic residues. The segment covering 1695–1708 (ETISSASTLSSLSA) has biased composition (low complexity). The segment covering 1709 to 1724 (EGGGNTGGVAGGGAGV) has biased composition (gly residues). Residues 1850 to 1861 (PGPPPPPLPGPL) are compositionally biased toward pro residues. Arginine 1901 carries the post-translational modification Omega-N-methylarginine. Low complexity-rich tracts occupy residues 1934-1945 (SQTSLLSKPSSS), 1960-1985 (TGSGVSSSTAAAPGATSPSASSASAS), and 2002-2012 (RRAPSPSLLPA). Arginine 2022, arginine 2042, and arginine 2080 each carry omega-N-methylarginine. An SAM domain is found at 2104–2167 (WTKFDVADWL…DRALKFFLER (64 aa)).

The protein belongs to the SHANK family. In terms of assembly, may homomultimerize via its SAM domain. Interacts with the C-terminus of SSTR2 via the PDZ domain. Interacts with SHARPIN, SPTAN1, HOMER1 and DLGAP1/GKAP. Part of a complex with DLG4/PSD-95 and DLGAP1/GKAP. Interacts with BAIAP2. Interacts with IGSF9. Interacts with HOMER1 and HOMER3. In terms of tissue distribution, in brain, highly expressed in cortex, hippocampus and cerebellum.

The protein localises to the cytoplasm. It is found in the synapse. It localises to the postsynaptic density. Functionally, seems to be an adapter protein in the postsynaptic density (PSD) of excitatory synapses that interconnects receptors of the postsynaptic membrane including NMDA-type and metabotropic glutamate receptors, and the actin-based cytoskeleton. Plays a role in the structural and functional organization of the dendritic spine and synaptic junction. Overexpression promotes maturation of dendritic spines and the enlargement of spine heads via its ability to recruit Homer to postsynaptic sites, and enhances presynaptic function. This is SH3 and multiple ankyrin repeat domains protein 1 (Shank1) from Mus musculus (Mouse).